The sequence spans 655 residues: Epithelial sodium channel subunit gamma (655 aa).

The Cytoplasmic segment spans residues 1–55; the sequence is MAPGEKIKAKIKKNLPVRGPQAPTIKDLMHWYCLNTNTHGCRRIVVSRGRLRRLL. A helical membrane pass occupies residues 56 to 76; the sequence is WIAFTLTAVALIIWQCALLVF. The Extracellular portion of the chain corresponds to 77-547; the sequence is SFYTVSVSIK…GGQLGLWMSC (471 aa). 8 disulfides stabilise this stretch: cysteine 100/cysteine 289, cysteine 213/cysteine 220, cysteine 266/cysteine 273, cysteine 378/cysteine 463, cysteine 400/cysteine 459, cysteine 404/cysteine 455, cysteine 413/cysteine 440, and cysteine 415/cysteine 429. The tract at residues 140 to 227 is gating release of inhibition by proteolysis (GRIP); protease-sensitive region that is responsible for the proteolytic activation of the channel; that stretch reads RKRREAGSMR…SDCATYTFSS (88 aa). N-linked (GlcNAc...) asparagine glycosylation is present at asparagine 215. Asparagine 277 is a glycosylation site (N-linked (GlcNAc...) asparagine). An N-linked (GlcNAc...) asparagine glycan is attached at asparagine 503. The helical transmembrane segment at 548–568 threads the bilayer; the sequence is SVVCVIEIIEVFFIDFFSIIA. The Cytoplasmic portion of the chain corresponds to 569–655; sequence RRQWQKAKDW…LTDTQLTNEF (87 aa). The tract at residues 582–636 is disordered; sequence RRTPPSTETPSSQQGQDNPALDTDDDLPTFTSAMRLPPAPEAPVPGTPPPRYNTL. Polar residues predominate over residues 585–598; that stretch reads PPSTETPSSQQGQD. Pro residues predominate over residues 618-632; the sequence is PPAPEAPVPGTPPPR. A PY motif; recruits WW domain-containing proteins and is thereby required for ubiquitination and inhibition of the channel by NEDD4 and NEDD4L motif is present at residues 629–633; the sequence is PPPRY.

Belongs to the amiloride-sensitive sodium channel (TC 1.A.6) family. SCNN1G subfamily. Component of the heterotrimeric epithelial sodium channel (ENaC) composed of an alpha/SCNN1A, a beta/SCNN1B and a gamma/SCNN1G subunit. Interacts with WWP1 (via WW domains). Interacts with WWP2 (via WW domains); inhibits the channel. Interacts with the full-length immature form of PCSK9 (pro-PCSK9); inhibits ENaC by promoting its proteasomal degradation. Interacts with BPIFA1; the interaction is indirect via SCNN1B and inhibits the proteolytic maturation of SCNN1A and SCNN1G and the activation of ENaC. Post-translationally, phosphorylated on serine and threonine residues. Aldosterone and insulin increase the basal level of phosphorylation. In terms of processing, ubiquitinated. Can be ubiquitinated at multiple sites and undergo monoubiquitination and polyubiquitination. Ubiquitination by NEDD4 or NEDD4L inhibits the ENaC channel through endocytosis, intracellular retention and degradation of its individual subunits. ENaC is activated through the proteolytic maturation of its subunits. Furin cleaves the SCNN1G subunit first, followed by cleavage by prostasin (PRSS8), which results in a stepwise increase in the open probability of the channel due to the release of an inhibitory tract. BPIFA1, which is recruited by the SCNN1B subunit, prevents the proteolytic activation of ENaC. Post-translationally, N-glycosylated. N-linked glycans are processed to complex type during ENaC complex assembly and transport to the plasma membrane. Lung and kidney.

It localises to the apical cell membrane. The enzyme catalyses Na(+)(in) = Na(+)(out). With respect to regulation, originally identified and characterized by its inhibition by the diuretic drug amiloride. In terms of biological role, this is one of the three pore-forming subunits of the heterotrimeric epithelial sodium channel (ENaC), a critical regulator of sodium balance and fluid homeostasis. ENaC operates in epithelial tissues, where it mediates the electrodiffusion of sodium ions from extracellular fluid through the apical membrane of cells, with water following osmotically. It plays a key role in maintaining sodium homeostasis through electrogenic sodium reabsorption in the kidneys. Additionally, ENaC is essential for airway surface liquid homeostasis, which is crucial for proper mucus clearance. The sequence is that of Epithelial sodium channel subunit gamma from Mus musculus (Mouse).